Here is a 293-residue protein sequence, read N- to C-terminus: Phosphoribosylaminoimidazole-succinocarboxamide synthase (293 aa).

It belongs to the SAICAR synthetase family.

The catalysed reaction is 5-amino-1-(5-phospho-D-ribosyl)imidazole-4-carboxylate + L-aspartate + ATP = (2S)-2-[5-amino-1-(5-phospho-beta-D-ribosyl)imidazole-4-carboxamido]succinate + ADP + phosphate + 2 H(+). It functions in the pathway purine metabolism; IMP biosynthesis via de novo pathway; 5-amino-1-(5-phospho-D-ribosyl)imidazole-4-carboxamide from 5-amino-1-(5-phospho-D-ribosyl)imidazole-4-carboxylate: step 1/2. This Desulfosudis oleivorans (strain DSM 6200 / JCM 39069 / Hxd3) (Desulfococcus oleovorans) protein is Phosphoribosylaminoimidazole-succinocarboxamide synthase.